The primary structure comprises 155 residues: Ribosomal RNA large subunit methyltransferase H (155 aa).

S-adenosyl-L-methionine is bound by residues L73, G104, and 123 to 128 (LSPLTL).

The protein belongs to the RNA methyltransferase RlmH family. In terms of assembly, homodimer.

It localises to the cytoplasm. The enzyme catalyses pseudouridine(1915) in 23S rRNA + S-adenosyl-L-methionine = N(3)-methylpseudouridine(1915) in 23S rRNA + S-adenosyl-L-homocysteine + H(+). In terms of biological role, specifically methylates the pseudouridine at position 1915 (m3Psi1915) in 23S rRNA. The chain is Ribosomal RNA large subunit methyltransferase H from Pseudomonas syringae pv. tomato (strain ATCC BAA-871 / DC3000).